A 471-amino-acid polypeptide reads, in one-letter code: Phosphatidate cytidylyltransferase 3 (471 aa).

Positions 1-72 (MAMEKDLSPN…HRRRSSENLA (72 aa)) are disordered. Positions 21-35 (SYPTTPTSRMNTNNQ) are enriched in polar residues. The next 8 membrane-spanning stretches (helical) occupy residues 97-116 (WIRT…IIYM), 120-139 (YIWA…LFFL), 149-169 (LPGF…FVYG), 196-216 (YQMV…ILTL), 228-250 (YAWT…ANIF), 255-277 (WFLL…GFYF), 293-313 (GFIG…NVLG), and 368-388 (FSLG…ASGF).

Belongs to the CDS family. Requires Mg(2+) as cofactor.

It is found in the membrane. The enzyme catalyses a 1,2-diacyl-sn-glycero-3-phosphate + CTP + H(+) = a CDP-1,2-diacyl-sn-glycerol + diphosphate. It functions in the pathway phospholipid metabolism; CDP-diacylglycerol biosynthesis; CDP-diacylglycerol from sn-glycerol 3-phosphate: step 3/3. Functionally, may be involved in the synthesis of minor phospholipids and in modulation of IP3-mediated signal transduction. This Arabidopsis thaliana (Mouse-ear cress) protein is Phosphatidate cytidylyltransferase 3.